The following is a 300-amino-acid chain: Protein CANDIDATE G-PROTEIN COUPLED RECEPTOR 2 (300 aa).

The next 7 membrane-spanning stretches (helical) occupy residues 37 to 57 (GFLHNTVLVLASILFVAYLAY), 73 to 93 (IMIAYYGFLWLVSLLNLAWCC), 110 to 130 (LTLFTTSGMLFLEVSLVAFLF), 152 to 172 (IGLDLLLKAIYLFGFGVPLFI), 183 to 203 (WGLWVIHKLLLAGIYGMIFFM), 222 to 242 (ITVMLALNGLSLFACALTANG), and 245 to 265 (FGLWLYGITSVCYHAFYLPLL).

This sequence belongs to the UPF0359 family. As to quaternary structure, interacts with GPA1. Expressed at low levels in seedlings.

Its subcellular location is the cell membrane. In terms of biological role, plays a role in plants and microbes interactions. G-protein coupled melatonin receptor involved in root growth mediated by the bacterial quorum-sensing signals N-acyl-homoserine lactones (AHLs). Binds to melatonin. Phytomelatonin receptor required, in collaboration with GPA1, for melatonin-mediated stomatal closure involving H(2)O(2) and Ca(2+) signals. Essential for melatonin-mediated plant response to osmotic stress probably by activating reactive oxygen species (ROS) scavenging ability. The chain is Protein CANDIDATE G-PROTEIN COUPLED RECEPTOR 2 from Arabidopsis thaliana (Mouse-ear cress).